The chain runs to 459 residues: MMALGRAFAIVFCLIQAVSGESGNAQDGDLEDADADDHSFWCHSQLEVDGSQHLLTCAFNDSDINTANLEFQICGALLRVKCLTLNKLQDIYFIKTSEFLLIGSSNICVKLGQKNLTCKNMAINTIVKAEAPSDLKVVYRKEANDFLVTFNAPHLKKKYLKKVKHDVAYRPARGESNWTHVSLFHTRTTIPQRKLRPKAMYEIKVRSIPHNDYFKGFWSEWSPSSTFETPEPKNQGGWDPVLPSVTILSLFSVFLLVILAHVLWKKRIKPVVWPSLPDHKKTLEQLCKKPKTSLNVSFNPESFLDCQIHEVKGVEARDEVESFLPNDLPAQPEELETQGHRAAVHSANRSPETSVSPPETVRRESPLRCLARNLSTCNAPPLLSSRSPDYRDGDRNRPPVYQDLLPNSGNTNVPVPVPQPLPFQSGILIPVSQRQPISTSSVLNQEEAYVTMSSFYQNK.

The N-terminal stretch at 1–20 (MMALGRAFAIVFCLIQAVSG) is a signal peptide. The Extracellular segment spans residues 21-239 (ESGNAQDGDL…PEPKNQGGWD (219 aa)). Residues Cys-42 and Cys-57 are joined by a disulfide bond. Residue Asn-60 is glycosylated (N-linked (GlcNAc...) asparagine). Intrachain disulfides connect Cys-74-Cys-82 and Cys-108-Cys-118. 2 N-linked (GlcNAc...) asparagine glycosylation sites follow: Asn-115 and Asn-177. One can recognise a Fibronectin type-III domain in the interval 131–232 (APSDLKVVYR…PSSTFETPEP (102 aa)). The short motif at 218–222 (WSEWS) is the WSXWS motif element. The helical transmembrane segment at 240-264 (PVLPSVTILSLFSVFLLVILAHVLW) threads the bilayer. At 265–459 (KKRIKPVVWP…VTMSSFYQNK (195 aa)) the chain is on the cytoplasmic side. A Box 1 motif motif is present at residues 272 to 280 (VWPSLPDHK). Residue Thr-282 is modified to Phosphothreonine; by PKC. Disordered regions lie at residues 337-365 (TQGH…RRES) and 378-413 (NAPP…NTNV). Polar residues predominate over residues 347–357 (ANRSPETSVSP). Residues 388–397 (PDYRDGDRNR) are compositionally biased toward basic and acidic residues.

This sequence belongs to the type I cytokine receptor family. Type 4 subfamily. The IL7 receptor is a heterodimer of IL7R and IL2RG. The TSLP receptor is a heterodimer of CRLF2 and IL7R. Interacts with CD53. In terms of processing, N-glycosylated IL-7Ralpha binds IL7 300-fold more tightly than the unglycosylated form. Post-translationally, ubiquitinated by MARCHF8; leading to lysosomal degradation. Spleen, thymus and fetal liver.

It localises to the membrane. Its function is as follows. Receptor for interleukin-7. Also acts as a receptor for thymic stromal lymphopoietin (TSLP). This is Interleukin-7 receptor subunit alpha (Il7r) from Mus musculus (Mouse).